The sequence spans 171 residues: MFRTEDSILPPLEWLSDNNSSVPPAIYDWLMELGSMTLRFERYCTRVHVEPRHEYFIARNELKEEAEHLPESSLYWLREVVLMGDNQPWLLGRTVIPQETLAHHSNALMNLGTLPLGRYLFSNGELTRDYIHIGRKDSLWARRSRLRLSGKPLLLTELFLADSPLYTEDPS.

Met36, Arg78, Leu116, and Glu157 together coordinate substrate.

Belongs to the UbiC family.

It localises to the cytoplasm. It catalyses the reaction chorismate = 4-hydroxybenzoate + pyruvate. It participates in cofactor biosynthesis; ubiquinone biosynthesis. Removes the pyruvyl group from chorismate, with concomitant aromatization of the ring, to provide 4-hydroxybenzoate (4HB) for the ubiquinone pathway. In Bartonella bacilliformis (strain ATCC 35685 / KC583 / Herrer 020/F12,63), this protein is Probable chorismate pyruvate-lyase.